A 341-amino-acid chain; its full sequence is Phosphoribosylformylglycinamidine cyclo-ligase (341 aa).

Belongs to the AIR synthase family.

It is found in the cytoplasm. The catalysed reaction is 2-formamido-N(1)-(5-O-phospho-beta-D-ribosyl)acetamidine + ATP = 5-amino-1-(5-phospho-beta-D-ribosyl)imidazole + ADP + phosphate + H(+). Its pathway is purine metabolism; IMP biosynthesis via de novo pathway; 5-amino-1-(5-phospho-D-ribosyl)imidazole from N(2)-formyl-N(1)-(5-phospho-D-ribosyl)glycinamide: step 2/2. This Caldicellulosiruptor saccharolyticus (strain ATCC 43494 / DSM 8903 / Tp8T 6331) protein is Phosphoribosylformylglycinamidine cyclo-ligase.